A 572-amino-acid chain; its full sequence is Hemagglutinin-neuraminidase (572 aa).

The Intravirion segment spans residues 1–31 (MEYWKHTNHGKDAGNELETSMATHGNKITNK). The chain crosses the membrane as a helical span at residues 32–52 (ITYILWTIILVLLSIVFIIVL). Over 53–572 (INSIKSEKAH…FKTEIPKSCS (520 aa)) the chain is Virion surface. Cystine bridges form between Cys190/Cys214 and Cys256/Cys269. The interval 252–257 (NRKSCS) is involved in neuraminidase activity. Asn308 and Asn351 each carry an N-linked (GlcNAc...) asparagine; by host glycan. 2 disulfide bridges follow: Cys355-Cys469 and Cys463-Cys473. An N-linked (GlcNAc...) asparagine; by host glycan is attached at Asn523. An intrachain disulfide couples Cys535 to Cys544.

This sequence belongs to the paramyxoviruses hemagglutinin-neuraminidase family. Homotetramer; composed of disulfide-linked homodimers. Interacts with F protein trimer.

The protein resides in the virion membrane. It localises to the host cell membrane. The enzyme catalyses Hydrolysis of alpha-(2-&gt;3)-, alpha-(2-&gt;6)-, alpha-(2-&gt;8)- glycosidic linkages of terminal sialic acid residues in oligosaccharides, glycoproteins, glycolipids, colominic acid and synthetic substrates.. Functionally, attaches the virus to sialic acid-containing cell receptors and thereby initiating infection. Binding of HN protein to the receptor induces a conformational change that allows the F protein to trigger virion/cell membranes fusion. In terms of biological role, neuraminidase activity ensures the efficient spread of the virus by dissociating the mature virions from the neuraminic acid containing glycoproteins. This chain is Hemagglutinin-neuraminidase (HN), found in Human parainfluenza 3 virus (strain Wash/47885/57) (HPIV-3).